Here is a 474-residue protein sequence, read N- to C-terminus: MCVICFVKALVHVFKIYLTANYSYNFRSWPVDFRWDDLHAPSTGNSSQRALTCAAAAAGVWLLHDAALGGDTLTRPPRGARSQVQCLLQQIRELPSQLASYALAHSLGRWLVYPGSMFLMTRALMPLLQQGQERLVDRYRGRRAKLVACDGNEIDTMFMDRRQHPGSHGRGLCLVICCEGNAGFYEMGCLSAPLEAGYSVLGWNHPGFGGSTGAPFPQHDANAMDVVVKYALHRLNFPPAHVVVYGWSIGGFTATWATMTYPELGALVLDATFDDLVPLALKVMPQSWKGLVVRTVREHFNLNVAEQLCCYPGPVLLLRRTQDDVVSTSNHIPSMPSCQVEGDVEGNRGNELLLRLLQHRYPSVMAREGRTVVTRWLRASNLAQETALYARYRVDDEWCLATLRSYRERCQKELDDAEAWGPHGLSFPWFVGQGLSARRRRQLALFLARRHLKNLEATHCSPLEPEDFQLPWRL.

An AB hydrolase-1 domain is found at 175-295 (VICCEGNAGF…QSWKGLVVRT (121 aa)). Catalysis depends on charge relay system residues serine 248, aspartate 323, and histidine 423.

It belongs to the AB hydrolase superfamily. ABHD16 family. As to expression, expressed in most tissues, with highest expression found in the testes, skeletal muscle, and brown adipose tissue.

It catalyses the reaction a 1,2-diacyl-sn-glycero-3-phospho-L-serine + H2O = a 2-acyl-sn-glycero-3-phospho-L-serine + a fatty acid + H(+). It carries out the reaction a 1-acylglycerol + H2O = glycerol + a fatty acid + H(+). The catalysed reaction is 1-(9Z-octadecenoyl)-glycerol + H2O = glycerol + (9Z)-octadecenoate + H(+). Functionally, hydrolyzes the sn-1 position of glycerophospholipids with high specificity towards phosphatidylserine (PS), PS-PLA1 enzyme. Also hydrolyzes the acyl chain of glycerolipids with a preference for the monoacylglycerol (MAG) 1-acylglycerol, MAG lipase. Plays a regulatory role in cellular lipid homeostasis by modulating genes involved in neutral lipid degradation and in phospholipid synthesis and composition. This Mus musculus (Mouse) protein is ABHD16B.